The sequence spans 323 residues: Putative gluconeogenesis factor (323 aa).

This sequence belongs to the gluconeogenesis factor family.

Its subcellular location is the cytoplasm. Required for morphogenesis under gluconeogenic growth conditions. The protein is Putative gluconeogenesis factor of Thermoanaerobacterium thermosulfurigenes (Clostridium thermosulfurogenes).